The chain runs to 214 residues: Ras-related protein Rab2BV (214 aa).

19–26 (GDSGVGKS) contributes to the GTP binding site. Residues 41-49 (SKSTIGVEF) carry the Effector region motif. GTP contacts are provided by residues 67–71 (DTAGQ) and 125–128 (NKSD). 2 S-geranylgeranyl cysteine lipidation sites follow: Cys211 and Cys212.

This sequence belongs to the small GTPase superfamily. Rab family.

The protein localises to the cell membrane. This chain is Ras-related protein Rab2BV (RAB2BV), found in Beta vulgaris (Sugar beet).